The chain runs to 549 residues: Undecaprenyl phosphate-alpha-4-amino-4-deoxy-L-arabinose arabinosyl transferase (549 aa).

The next 12 membrane-spanning stretches (helical) occupy residues leucine 9–isoleucine 29, leucine 80–leucine 100, serine 112–alanine 132, proline 136–glycine 156, phenylalanine 176–leucine 196, leucine 204–leucine 224, proline 256–proline 276, glutamine 288–serine 308, leucine 312–valine 332, asparagine 346–leucine 366, phenylalanine 376–tryptophan 396, and alanine 402–proline 422.

This sequence belongs to the glycosyltransferase 83 family.

The protein localises to the cell inner membrane. It catalyses the reaction 4-amino-4-deoxy-alpha-L-arabinopyranosyl di-trans,octa-cis-undecaprenyl phosphate + lipid IVA = lipid IIA + di-trans,octa-cis-undecaprenyl phosphate.. It participates in lipopolysaccharide metabolism; 4-amino-4-deoxy-beta-L-arabinose-lipid A biosynthesis. Functionally, catalyzes the transfer of the L-Ara4N moiety of the glycolipid undecaprenyl phosphate-alpha-L-Ara4N to lipid A. The modified arabinose is attached to lipid A and is required for resistance to polymyxin and cationic antimicrobial peptides. This is Undecaprenyl phosphate-alpha-4-amino-4-deoxy-L-arabinose arabinosyl transferase from Pseudomonas paraeruginosa (strain DSM 24068 / PA7) (Pseudomonas aeruginosa (strain PA7)).